A 291-amino-acid polypeptide reads, in one-letter code: Pantothenate synthetase (291 aa).

30 to 37 is an ATP binding site; the sequence is MGALHAGH. Histidine 37 acts as the Proton donor in catalysis. Residue glutamine 61 participates in (R)-pantoate binding. Glutamine 61 serves as a coordination point for beta-alanine. ATP is bound at residue 147–150; that stretch reads GQKD. Glutamine 153 serves as a coordination point for (R)-pantoate. Residues valine 176 and 184 to 187 each bind ATP; that span reads LSSR.

Belongs to the pantothenate synthetase family. Homodimer.

The protein resides in the cytoplasm. It carries out the reaction (R)-pantoate + beta-alanine + ATP = (R)-pantothenate + AMP + diphosphate + H(+). It participates in cofactor biosynthesis; (R)-pantothenate biosynthesis; (R)-pantothenate from (R)-pantoate and beta-alanine: step 1/1. In terms of biological role, catalyzes the condensation of pantoate with beta-alanine in an ATP-dependent reaction via a pantoyl-adenylate intermediate. This Koribacter versatilis (strain Ellin345) protein is Pantothenate synthetase.